Consider the following 711-residue polypeptide: Amyloid beta precursor protein binding family B member 1 (711 aa).

S135 carries the post-translational modification Phosphoserine. 3 disordered regions span residues 140–257 (NTQG…SDLP), 277–300 (GTTQWEPPGRASPSQGNSPQEESQ), and 321–364 (EPSE…QRNA). Positions 156–174 (EVEEEDEDEEEEDEEEEDL) are enriched in acidic residues. The residue at position 205 (K205) is an N6-acetyllysine. Positions 224–235 (SWATLSQGSPSY) are enriched in polar residues. In terms of domain architecture, WW spans 254–286 (SDLPAGWMRVQDTSGTYYWHIPTGTTQWEPPGR). A compositionally biased stretch (polar residues) spans 288-300 (SPSQGNSPQEESQ). PID domains are found at residues 365-533 (NPGI…QVEF) and 538-700 (NELV…LWGS). S460 carries the phosphoserine; by PKC modification. Position 518 is a phosphoserine (S518). Y548 carries the phosphotyrosine; by ABL1 modification. A Phosphoserine; by SGK1 modification is found at S611. K702 bears the N6-acetyllysine mark.

In terms of assembly, component of a complex, at least composed of APBB1, RASD1/DEXRAS1 and APP. Interacts (via PID domain 2) with APP (with the intracellular domain of the amyloid-beta precursor protein). Interacts (via PID domain 2) with RASD1/DEXRAS1; impairs the transcription activation activity. Interacts (via PID domain 1) with KAT5/TIP60. Interacts (via the WW domain) with the proline-rich region of APBB1IP. Interacts with TSHZ1 and TSHZ2. Interacts (via the WW domain) with histone H2AX (when phosphorylated on 'Tyr-142') and the proline-rich region of ENAH. Interacts with MAPK8. Interacts (via PID domain 1) with TSHZ3 (via homeobox domain). Interacts with SET. Found in a trimeric complex with HDAC1 and TSHZ3; the interaction between HDAC1 and APBB1 is mediated by TSHZ3. Interacts (via WWW domain) with NEK6. Interacts (via WWW domain) with ABL1. Interacts with RNF157. Interacts with ARF6. In terms of processing, polyubiquitination by RNF157 leads to degradation by the proteasome. Post-translationally, phosphorylation at Ser-611 by SGK1 promotes its localization to the nucleus. Phosphorylated following nuclear translocation. Phosphorylation at Tyr-547 by ABL1 enhances transcriptional activation activity and reduces the affinity for RASD1/DEXRAS1. Phosphorylated at Ser-460 by PKC upon insulin activation. Acetylation at Lys-205 and Lys-702 by KAT5 promotes its transcription activator activity. As to expression, brain, not in liver, very low in other tissues. The long (neuron-specific) form is expressed only in brain.

The protein localises to the cell membrane. It is found in the cytoplasm. It localises to the nucleus. The protein resides in the cell projection. Its subcellular location is the growth cone. The protein localises to the nucleus speckle. Its function is as follows. Transcription coregulator that can have both coactivator and corepressor functions. Adapter protein that forms a transcriptionally active complex with the gamma-secretase-derived amyloid precursor protein (APP) intracellular domain. Plays a central role in the response to DNA damage by translocating to the nucleus and inducing apoptosis. May act by specifically recognizing and binding histone H2AX phosphorylated on 'Tyr-142' (H2AXY142ph) at double-strand breaks (DSBs), recruiting other pro-apoptosis factors such as MAPK8/JNK1. Required for histone H4 acetylation at double-strand breaks (DSBs). Its ability to specifically bind modified histones and chromatin modifying enzymes such as KAT5/TIP60, probably explains its transcription activation activity. Functions in association with TSHZ3, SET and HDAC factors as a transcriptional repressor, that inhibits the expression of CASP4. Associates with chromatin in a region surrounding the CASP4 transcriptional start site(s). Involved in hippocampal neurite branching and neuromuscular junction formation, as a result plays a role in spatial memory functioning. Plays a role in the maintenance of lens transparency. May play a role in muscle cell strength. Acts as a molecular adapter that functions in neurite outgrowth by activating the RAC1-ARF6 axis upon insulin treatment. In Rattus norvegicus (Rat), this protein is Amyloid beta precursor protein binding family B member 1.